Reading from the N-terminus, the 435-residue chain is Adenylosuccinate synthetase (435 aa).

GTP is bound by residues 22–28 and 50–52; these read GDEGKGK and GHT. The active-site Proton acceptor is the Asp-23. Positions 23 and 50 each coordinate Mg(2+). IMP is bound by residues 23–26, 48–51, Thr-140, Arg-154, Gln-235, Thr-250, and Arg-314; these read DEGK and NAGH. The active-site Proton donor is the His-51. Residue 310-316 participates in substrate binding; the sequence is ATTGRKR. Residues Arg-316, 342–344, and 424–426 each bind GTP; these read KLD and SVG.

Belongs to the adenylosuccinate synthetase family. As to quaternary structure, homodimer. Mg(2+) is required as a cofactor.

The protein resides in the cytoplasm. The enzyme catalyses IMP + L-aspartate + GTP = N(6)-(1,2-dicarboxyethyl)-AMP + GDP + phosphate + 2 H(+). The protein operates within purine metabolism; AMP biosynthesis via de novo pathway; AMP from IMP: step 1/2. Its function is as follows. Plays an important role in the de novo pathway of purine nucleotide biosynthesis. Catalyzes the first committed step in the biosynthesis of AMP from IMP. This chain is Adenylosuccinate synthetase, found in Chlorobaculum tepidum (strain ATCC 49652 / DSM 12025 / NBRC 103806 / TLS) (Chlorobium tepidum).